Consider the following 475-residue polypeptide: WASH complex subunit 1 (475 aa).

The tract at residues 1–54 (MTAVKTQHSLAGQVYAVPLIQPDLRREEAIQQVADALQYLQNISGDIFSRISQR) is required for WASH complex assembly. A WHD1 region spans residues 1–167 (MTAVKTQHSL…EGLGGLPSNI (167 aa)). Residue Lys219 forms a Glycyl lysine isopeptide (Lys-Gly) (interchain with G-Cter in ubiquitin) linkage. Residues 296 to 475 (EDGALLAPPP…GDEDEDDWES (180 aa)) are disordered. Residues 302–318 (APPPPPPPPPPPPPPAP) show a composition bias toward pro residues. The VCA stretch occupies residues 357-475 (QGAPKEVVDP…GDEDEDDWES (119 aa)). The WH2 domain occupies 369-391 (GRATLLESIRQAGGIGKAKLRSV). Positions 390–406 (SVKERKLEKKKQKEQEQ) are enriched in basic and acidic residues. Positions 432–446 (SGKGPGTGTSEGPGG) are enriched in gly residues. Residues 466-475 (GDEDEDDWES) show a composition bias toward acidic residues.

It belongs to the WASH1 family. As to quaternary structure, component of the WASH core complex also described as WASH regulatory complex SHRC composed of WASHC1, WASHC2, WASHC3, WASHC4 and WASHC5. The WASH core complex associates with the F-actin-capping protein dimer (formed by CAPZA1, CAPZA2 or CAPZA3 and CAPZB) in a transient or substoichiometric manner which was initially described as WASH complex. Interacts (via WHD1 region) with WASHC2; the interaction is direct. Interacts with BECN1; WASHC1 and AMBRA1 can competitively interact with BECN1. Interacts with BLOC1S2; may associate with the BLOC-1 complex. Interacts with tubulin gamma chain (TUBG1 or TUBG2). Interacts with TBC1D23. Post-translationally, ubiquitinated at Lys-219 via 'Lys-63'-linked ubiquitin chains by the TRIM27:MAGEL2 E3 ubiquitin ligase complex, leading to promote endosomal F-actin assembly.

The protein localises to the early endosome membrane. The protein resides in the recycling endosome membrane. Functionally, acts as a component of the WASH core complex that functions as a nucleation-promoting factor (NPF) at the surface of endosomes, where it recruits and activates the Arp2/3 complex to induce actin polymerization, playing a key role in the fission of tubules that serve as transport intermediates during endosome sorting. Regulates the trafficking of endosomal alpha5beta1 integrin to the plasma membrane and involved in invasive cell migration. In T-cells involved in endosome-to-membrane recycling of receptors including T-cell receptor (TCR), CD28 and ITGAL; proposed to be implicated in T-cell proliferation and effector function. In dendritic cells involved in endosome-to-membrane recycling of major histocompatibility complex (MHC) class II probably involving retromer and subsequently allowing antigen sampling, loading and presentation during T-cell activation. Involved in cytokinesis and following polar body extrusion during oocyte meiotic maturation. Involved in Arp2/3 complex-dependent actin assembly driving Salmonella typhimurium invasion independent of ruffling. Involved in the exocytosis of MMP14 leading to matrix remodeling during invasive migration and implicating late endosome-to-plasma membrane tubular connections and cooperation with the exocyst complex. Involved in negative regulation of autophagy independently from its role in endosomal sorting by inhibiting BECN1 ubiquitination to inactivate PIK3C3/Vps34 activity. The chain is WASH complex subunit 1 from Rattus norvegicus (Rat).